Consider the following 301-residue polypeptide: NAD kinase 2 (301 aa).

Residue Asp-77 is the Proton acceptor of the active site. NAD(+) is bound by residues 77-78, Arg-82, 151-152, Arg-162, Asp-181, and 192-197; these read DG, NE, and TAYAFS.

The protein belongs to the NAD kinase family. A divalent metal cation is required as a cofactor.

Its subcellular location is the cytoplasm. The catalysed reaction is NAD(+) + ATP = ADP + NADP(+) + H(+). In terms of biological role, involved in the regulation of the intracellular balance of NAD and NADP, and is a key enzyme in the biosynthesis of NADP. Catalyzes specifically the phosphorylation on 2'-hydroxyl of the adenosine moiety of NAD to yield NADP. This Streptomyces avermitilis (strain ATCC 31267 / DSM 46492 / JCM 5070 / NBRC 14893 / NCIMB 12804 / NRRL 8165 / MA-4680) protein is NAD kinase 2.